Consider the following 831-residue polypeptide: Heat shock 70 kDa protein 14 (831 aa).

Disordered stretches follow at residues 503 to 579 (EEVE…KKKV) and 786 to 831 (TKPK…EGST). Residues 509 to 526 (VTKEHSEETTKMDSDKAS) show a composition bias toward basic and acidic residues. Position 533 is a phosphoserine (S533).

The protein belongs to the heat shock protein 70 (TC 1.A.33) family. HSP110/SSE subfamily. In terms of assembly, interacts with HTT1 in both cytoplasm and nucleus. In terms of tissue distribution, constitutively expressed.

It is found in the cytoplasm. It localises to the nucleus. In cooperation with other chaperones, Hsp70s are key components that facilitate folding of de novo synthesized proteins, assist translocation of precursor proteins into organelles, and are responsible for degradation of damaged protein under stress conditions. In Arabidopsis thaliana (Mouse-ear cress), this protein is Heat shock 70 kDa protein 14 (HSP70-14).